Consider the following 944-residue polypeptide: Isoleucine--tRNA ligase (944 aa).

The short motif at 58 to 68 is the 'HIGH' region element; it reads PYANGSIHIGH. Glu-563 provides a ligand contact to L-isoleucyl-5'-AMP. The short motif at 604 to 608 is the 'KMSKS' region element; that stretch reads KMSKS. Lys-607 is an ATP binding site. 4 residues coordinate Zn(2+): Cys-907, Cys-910, Cys-927, and Cys-930.

This sequence belongs to the class-I aminoacyl-tRNA synthetase family. IleS type 1 subfamily. In terms of assembly, monomer. Zn(2+) is required as a cofactor.

It localises to the cytoplasm. The catalysed reaction is tRNA(Ile) + L-isoleucine + ATP = L-isoleucyl-tRNA(Ile) + AMP + diphosphate. Its function is as follows. Catalyzes the attachment of isoleucine to tRNA(Ile). As IleRS can inadvertently accommodate and process structurally similar amino acids such as valine, to avoid such errors it has two additional distinct tRNA(Ile)-dependent editing activities. One activity is designated as 'pretransfer' editing and involves the hydrolysis of activated Val-AMP. The other activity is designated 'posttransfer' editing and involves deacylation of mischarged Val-tRNA(Ile). This Salmonella choleraesuis (strain SC-B67) protein is Isoleucine--tRNA ligase.